Consider the following 230-residue polypeptide: Large ribosomal subunit protein uL1 (230 aa).

Belongs to the universal ribosomal protein uL1 family. In terms of assembly, part of the 50S ribosomal subunit.

Its function is as follows. Binds directly to 23S rRNA. The L1 stalk is quite mobile in the ribosome, and is involved in E site tRNA release. In terms of biological role, protein L1 is also a translational repressor protein, it controls the translation of the L11 operon by binding to its mRNA. The polypeptide is Large ribosomal subunit protein uL1 (Bradyrhizobium sp. (strain ORS 278)).